The chain runs to 376 residues: Pyruvate dehydrogenase E1 component subunit beta-2, mitochondrial (376 aa).

The N-terminal 36 residues, methionine 1–tyrosine 36, are a transit peptide targeting the mitochondrion. Glutamate 99 serves as a coordination point for thiamine diphosphate. The K(+) site is built by isoleucine 152, alanine 200, isoleucine 201, and aspartate 203.

As to quaternary structure, tetramer of 2 alpha and 2 beta subunits. Thiamine diphosphate serves as cofactor.

It localises to the mitochondrion matrix. It carries out the reaction N(6)-[(R)-lipoyl]-L-lysyl-[protein] + pyruvate + H(+) = N(6)-[(R)-S(8)-acetyldihydrolipoyl]-L-lysyl-[protein] + CO2. In terms of biological role, the pyruvate dehydrogenase complex catalyzes the overall conversion of pyruvate to acetyl-CoA and CO(2). It contains multiple copies of three enzymatic components: pyruvate dehydrogenase (E1), dihydrolipoamide acetyltransferase (E2) and lipoamide dehydrogenase (E3). The sequence is that of Pyruvate dehydrogenase E1 component subunit beta-2, mitochondrial from Oryza sativa subsp. japonica (Rice).